Consider the following 275-residue polypeptide: ATP synthase subunit delta (275 aa).

The protein belongs to the ATPase delta chain family. In terms of assembly, F-type ATPases have 2 components, F(1) - the catalytic core - and F(0) - the membrane proton channel. F(1) has five subunits: alpha(3), beta(3), gamma(1), delta(1), epsilon(1). F(0) has three main subunits: a(1), b(2) and c(10-14). The alpha and beta chains form an alternating ring which encloses part of the gamma chain. F(1) is attached to F(0) by a central stalk formed by the gamma and epsilon chains, while a peripheral stalk is formed by the delta and b chains.

The protein resides in the cell membrane. Its function is as follows. F(1)F(0) ATP synthase produces ATP from ADP in the presence of a proton or sodium gradient. F-type ATPases consist of two structural domains, F(1) containing the extramembraneous catalytic core and F(0) containing the membrane proton channel, linked together by a central stalk and a peripheral stalk. During catalysis, ATP synthesis in the catalytic domain of F(1) is coupled via a rotary mechanism of the central stalk subunits to proton translocation. Functionally, this protein is part of the stalk that links CF(0) to CF(1). It either transmits conformational changes from CF(0) to CF(1) or is implicated in proton conduction. The chain is ATP synthase subunit delta from Nocardioides sp. (strain ATCC BAA-499 / JS614).